The primary structure comprises 46 residues: Endochitinase 3 (46 aa).

A disordered region spans residues 1–21 (MTPQGNKPSSHDVITGRWTPS).

The protein belongs to the glycosyl hydrolase 19 family. Chitinase class I subfamily.

The enzyme catalyses Random endo-hydrolysis of N-acetyl-beta-D-glucosaminide (1-&gt;4)-beta-linkages in chitin and chitodextrins.. In terms of biological role, defense against chitin-containing fungal and bacterial pathogens. This is Endochitinase 3 from Arachis hypogaea (Peanut).